The following is a 270-amino-acid chain: Phosphatidylinositol transfer protein alpha isoform (270 aa).

6 residues coordinate a 1,2-diacyl-sn-glycero-3-phospho-(1D-myo-inositol): threonine 58, lysine 60, glutamate 85, asparagine 89, threonine 96, and lysine 194. At lysine 215 the chain carries N6-acetyllysine. The segment covering 250–263 (TKRQLDEMRQKDPV) has biased composition (basic and acidic residues). Positions 250 to 270 (TKRQLDEMRQKDPVKGMTADD) are disordered.

Belongs to the PtdIns transfer protein family. PI transfer class I subfamily.

It localises to the cytoplasm. Its subcellular location is the nucleus. It carries out the reaction a 1,2-diacyl-sn-glycero-3-phosphocholine(in) = a 1,2-diacyl-sn-glycero-3-phosphocholine(out). The catalysed reaction is a 1,2-diacyl-sn-glycero-3-phospho-(1D-myo-inositol)(in) = a 1,2-diacyl-sn-glycero-3-phospho-(1D-myo-inositol)(out). Phosphatidylinositol transfer activity is inhibited by N-ethylmaleimide. Catalyzes the transfer of phosphatidylinositol (PI) and phosphatidylcholine (PC) between membranes. Shows a preference for PI and PC containing shorter saturated or monosaturated acyl chains at the sn-1 and sn-2 positions. Preference order for PC is C16:1 &gt; C16:0 &gt; C18:1 &gt; C18:0 &gt; C20:4 and for PI is C16:1 &gt; C16:0 &gt; C18:1 &gt; C18:0 &gt; C20:4 &gt; C20:3. This is Phosphatidylinositol transfer protein alpha isoform (PITPNA) from Homo sapiens (Human).